Consider the following 213-residue polypeptide: Transmembrane emp24 domain-containing protein p24delta8 (213 aa).

An N-terminal signal peptide occupies residues 1 to 22 (MDLCRSSILLLIIALLSPRTLS). The Lumenal segment spans residues 23-180 (MRYELKSSKT…QELNRSTNSK (158 aa)). Residues 32–148 (TKCIGEEIHE…VDMMEYQVKT (117 aa)) enclose the GOLD domain. N-linked (GlcNAc...) asparagine glycosylation occurs at Asn97. Positions 163-176 (LREREEEMQELNRS) form a coiled coil. Arg166 bears the Omega-N-methylated arginine mark. Asn174 carries N-linked (GlcNAc...) asparagine glycosylation. The helical transmembrane segment at 181–203 (MAWLSFGSLVVCLSVAGLQFWHL) threads the bilayer. An interaction with ARF1 region spans residues 202 to 213 (HLKTFFEKKKLI). Over 204–213 (KTFFEKKKLI) the chain is Cytoplasmic. Residues 206–207 (FF) carry the COPII vesicle coat-binding motif. The short motif at 206–213 (FFEKKKLI) is the COPI vesicle coat-binding element.

Belongs to the EMP24/GP25L family. Probably oligomerizes with other members of the EMP24/GP25L family. Associates with the COPI vesicle coat (coatomer). Associates with the COPII vesicle coat (coatomer). Interacts with ARF1 (GDP-bound).

The protein localises to the endoplasmic reticulum membrane. It localises to the golgi apparatus. It is found in the cis-Golgi network membrane. Its subcellular location is the golgi stack membrane. Its function is as follows. Involved in vesicular protein trafficking. Mainly functions in the early secretory pathway. Thought to act as cargo receptor at the lumenal side for incorporation of secretory cargo molecules into transport vesicles and to be involved in vesicle coat formation at the cytoplasmic side. On Golgi membranes, acts as a primary receptor for ARF1-GDP which is involved in COPI-vesicle formation. This is Transmembrane emp24 domain-containing protein p24delta8 from Arabidopsis thaliana (Mouse-ear cress).